The chain runs to 727 residues: ATP-dependent zinc metalloprotease FtsH (727 aa).

Residues 1–6 (MQKAFR) are Cytoplasmic-facing. Residues 7–27 (NVLVIAIIGVIIFGVFSYING) traverse the membrane as a helical segment. Over 28–110 (NGNTPKQLSY…KVKEEEKQSV (83 aa)) the chain is Extracellular. A helical membrane pass occupies residues 111-131 (FVSMLTTLIPVLIIAFLFIFF). The Cytoplasmic segment spans residues 132 to 727 (LSQAQGGGGG…PNDPNNPSNR (596 aa)). 205-212 (GPPGTGKT) lines the ATP pocket. His-427 contributes to the Zn(2+) binding site. Glu-428 is a catalytic residue. Positions 431 and 503 each coordinate Zn(2+). Composition is skewed to basic and acidic residues over residues 645–684 (LEEGKEDMREDRKEDNDMNRERRHRQRDDRDNQTGHDQLR) and 691–706 (NDQHRGHSNNEEDTGH). The segment at 645–727 (LEEGKEDMRE…PNDPNNPSNR (83 aa)) is disordered. A compositionally biased stretch (low complexity) spans 710–727 (PNIDKPYNPNDPNNPSNR).

In the central section; belongs to the AAA ATPase family. This sequence in the C-terminal section; belongs to the peptidase M41 family. In terms of assembly, homohexamer. Zn(2+) is required as a cofactor.

Its subcellular location is the cell membrane. Acts as a processive, ATP-dependent zinc metallopeptidase for both cytoplasmic and membrane proteins. Plays a role in the quality control of integral membrane proteins. The sequence is that of ATP-dependent zinc metalloprotease FtsH from Staphylococcus haemolyticus (strain JCSC1435).